Consider the following 362-residue polypeptide: G-protein coupled receptor 4 (362 aa).

At 1–8 (MGNRTLEG) the chain is on the extracellular side. N-linked (GlcNAc...) asparagine glycosylation is present at Asn3. A helical transmembrane segment spans residues 9–45 (CHVDSRMDHLFPPSLYIFVIGVGLPTNCLALWAAYRQ). 2 disulfides stabilise this stretch: Cys9/Cys258 and Cys90/Cys168. At 46 to 49 (VRQR) the chain is on the cytoplasmic side. A helical transmembrane segment spans residues 50–80 (NELGVYLMNLSIADLLYICTLPLWVDYFLHH). Residues 81–85 (DNWIH) lie on the Extracellular side of the membrane. A helical membrane pass occupies residues 86–121 (GPGSCKLFGFIFYTNIYISIAFLCCISVDRYLAVAH). At 122–129 (PLRFARLR) the chain is on the cytoplasmic side. A helical transmembrane segment spans residues 130–156 (RVKTAVAVSSVVWATELGANSAPLFHD). Residues 157–172 (ELFRDRYNHTFCFEKF) lie on the Extracellular side of the membrane. The segment at 157–172 (ELFRDRYNHTFCFEKF) is extracellular loop 2 (ECL2). The N-linked (GlcNAc...) asparagine glycan is linked to Asn164. A helical membrane pass occupies residues 173–210 (PMEGWVAWMNLYRVFVGFLFPWALMLLSYRGILRAVRG). Residues 211–214 (SVST) are Cytoplasmic-facing. A helical membrane pass occupies residues 215–250 (ERQEKVKIKRLALSLIAIVLVCFAPYHVLLLSRSAV). The Extracellular segment spans residues 251–260 (YLRRPRDCGF). A helical membrane pass occupies residues 261–289 (EERVFSAYHSSLAFTSLNCVADPILYCLV). The Cytoplasmic segment spans residues 290-362 (NEGARSDVAK…VQLKMLPPAQ (73 aa)).

This sequence belongs to the G-protein coupled receptor 1 family.

It is found in the cell membrane. Activated by a network of residues that connects an extracellular-facing cavity to Glu-145, a conserved charged residue buried in the transmembrane core of the receptor. Protonation likely drives conformational changes in extracellular loop 2 (ECL2), which stabilizes movement of transmembrane 3 (TM3) and a series of rearrangements that connect the extracellular-facing cavity to Glu-145, a residue only conserved in proton-sensing G-protein coupled receptors. Its function is as follows. Proton-sensing G-protein coupled receptor activated by extracellular pH, which is required to monitor pH changes and generate adaptive reactions. Activated by an optimal pH of 6.8-7.2. Ligand binding causes a conformation change that triggers signaling via guanine nucleotide-binding proteins (G proteins) and modulates the activity of downstream effectors, such as adenylate cyclase. GPR4 is mainly coupled to G(s) G proteins and mediates activation of adenylate cyclase activity. May also couple with G(q) and G(12)/G(13) G proteins. Acts as a key regulator of respiratory sensitivity to CO2/H(+) in brain retrotrapezoid nucleus neurons: acts by mediating detection of protons generated by the formation of carbonic acid in the blood, an important mechanism to impulse to breathe. Also acts as a regulator of acid secretion in the kidney collecting duct by maintaining acid-base homeostasis in the kidney. Acidosis-induced GPR4 activation increases paracellular gap formation and permeability of vascular endothelial cells, possibly through the G(12)/G(13)/Rho GTPase signaling pathway. This Bos taurus (Bovine) protein is G-protein coupled receptor 4 (GPR4).